The following is a 177-amino-acid chain: Large ribosomal subunit protein uL6 (177 aa).

It belongs to the universal ribosomal protein uL6 family. As to quaternary structure, part of the 50S ribosomal subunit.

Its function is as follows. This protein binds to the 23S rRNA, and is important in its secondary structure. It is located near the subunit interface in the base of the L7/L12 stalk, and near the tRNA binding site of the peptidyltransferase center. This Rhizobium johnstonii (strain DSM 114642 / LMG 32736 / 3841) (Rhizobium leguminosarum bv. viciae) protein is Large ribosomal subunit protein uL6.